The following is a 437-amino-acid chain: GTPase Era, mitochondrial (437 aa).

The transit peptide at methionine 1 to cysteine 43 directs the protein to the mitochondrion. In terms of domain architecture, Era-type G spans arginine 112–glycine 330. The interval glycine 120–serine 127 is G1. A GTP-binding site is contributed by glycine 120–serine 127. The interval histidine 146 to serine 150 is G2. Residues aspartate 167 to glycine 170 are G3. Aspartate 167 to leucine 171 serves as a coordination point for GTP. The residue at position 173 (serine 173) is a Phosphoserine. GTP is bound at residue asparagine 236–aspartate 239. A G4 region spans residues asparagine 236–aspartate 239. A disordered region spans residues leucine 264–glutamine 296. Positions leucine 308–alanine 310 are G5. One can recognise a KH type-2 domain in the interval leucine 360–lysine 437.

Belongs to the TRAFAC class TrmE-Era-EngA-EngB-Septin-like GTPase superfamily. Era GTPase family.

Its subcellular location is the mitochondrion matrix. The protein localises to the mitochondrion inner membrane. Functionally, probable GTPase that plays a role in the mitochondrial ribosomal small subunit assembly. Specifically binds the 12S mitochondrial rRNA (12S mt-rRNA) to a 33 nucleotide section delineating the 3' terminal stem-loop region. May act as a chaperone that protects the 12S mt-rRNA on the 28S mitoribosomal subunit during ribosomal small subunit assembly. This is GTPase Era, mitochondrial (ERAL1) from Bos taurus (Bovine).